A 196-amino-acid chain; its full sequence is V-type proton ATPase proteolipid subunit (196 aa).

Topologically, residues 1-25 (MFQLLSFLLSGEATAVERIITDACP) are lumenal. The helical transmembrane segment at 26–46 (VYAPFFGAMGVTAALVFTVMG) threads the bilayer. At 47-72 (AAYGTAKASVGISNMGVMKPDLVIKA) the chain is on the cytoplasmic side. A helical membrane pass occupies residues 73-93 (FIPVIFAGVIAIYGLIICVIL). The Lumenal segment spans residues 94-111 (VGGIKPNANYTLMKSFTD). The chain crosses the membrane as a helical span at residues 112–132 (LGAGLTVGLCGLAAGMAIGIV). The Cytoplasmic portion of the chain corresponds to 133–150 (GDSGVRAFGQQPKLYVIM). Residues 151–171 (MLILIFSEALGLYGLIIGILL) form a helical membrane-spanning segment. Over 172–196 (SSVSDTYCPGQALVPLNSGNVIGKN) the chain is Lumenal.

This sequence belongs to the V-ATPase proteolipid subunit family. V-ATPase is a heteromultimeric enzyme composed of a peripheral catalytic V1 complex (main components: subunits A, B, C, D, E, and F) attached to an integral membrane V0 proton pore complex (main component: the proteolipid protein; which is present as a hexamer that forms the proton-conducting pore).

It is found in the vacuole membrane. Functionally, proton-conducting pore forming subunit of the membrane integral V0 complex of vacuolar ATPase. V-ATPase is responsible for acidifying a variety of intracellular compartments in eukaryotic cells. This chain is V-type proton ATPase proteolipid subunit (vatP), found in Dictyostelium discoideum (Social amoeba).